A 323-amino-acid polypeptide reads, in one-letter code: Transcription factor MafB (323 aa).

Lys-32 is covalently cross-linked (Glycyl lysine isopeptide (Lys-Gly) (interchain with G-Cter in SUMO)). Basic and acidic residues predominate over residues Glu-34–Gly-43. Disordered regions lie at residues Glu-34–Pro-78 and Pro-116–Arg-210. A compositionally biased stretch (low complexity) spans Ser-54–Glu-77. Basic residues-rich tracts occupy residues Ser-129–His-143 and Ala-159–Gln-168. Low complexity predominate over residues Pro-192–Ala-201. The segment at Arg-238–Lys-263 is basic motif. The 64-residue stretch at Arg-238–Leu-301 folds into the bZIP domain. The leucine-zipper stretch occupies residues Leu-266–Leu-287. Lys-297 is covalently cross-linked (Glycyl lysine isopeptide (Lys-Gly) (interchain with G-Cter in SUMO)).

Belongs to the bZIP family. Maf subfamily. As to quaternary structure, homodimer or heterodimer with other bHLH-Zip transcription factors. Forms homodimers and heterodimers with FOS, FOSB and FOSL2, but not with JUN proteins (JUN, JUNB and JUND). Interacts with the intracellular cytoplasmic domain of LRP1 (LRPICD); the interaction results in a moderate reduction of MAFB transcriptional potential. Binds DNA as a homodimer or a heterodimer. Interacts with PAX6; the interaction is direct. Interacts with ETS1 and LRP1. In terms of processing, sumoylated. Sumoylation on Lys-32 and Lys-297 stimulates its transcriptional repression activity and promotes macrophage differentiation from myeloid progenitors. In terms of tissue distribution, expressed in pancreatic alpha-cells (glucagon-positive cells), in podocytes of the kidney and macrophages (at protein level). Most abundant in kidney, gut, lung and brain.

It localises to the nucleus. Its function is as follows. Acts as a transcriptional activator or repressor. Plays a pivotal role in regulating lineage-specific hematopoiesis by repressing ETS1-mediated transcription of erythroid-specific genes in myeloid cells. Required for monocytic, macrophage, osteoclast, podocyte and islet beta cell differentiation. Involved in renal tubule survival and F4/80 maturation. Activates the insulin and glucagon promoters. Together with PAX6, transactivates weakly the glucagon gene promoter through the G1 element. SUMO modification controls its transcriptional activity and ability to specify macrophage fate. Binds element G1 on the glucagon promoter. Involved either as an oncogene or as a tumor suppressor, depending on the cell context. Required for the transcriptional activation of HOXB3 in the rhombomere r5 in the hindbrain. This Mus musculus (Mouse) protein is Transcription factor MafB (Mafb).